The following is a 746-amino-acid chain: Quiannulatene synthase (746 aa).

The sesterterpenoid synthase stretch occupies residues 1–336 (MASEVIVISD…SRYPTKTELN (336 aa)). Asp-95 lines the Mg(2+) pocket. The geranylfarnesyl diphosphate synthase stretch occupies residues 338-746 (PEVIIVDGEL…VELMLRRLWV (409 aa)). Isopentenyl diphosphate contacts are provided by Lys-465, Arg-468, and His-497. Mg(2+) is bound by residues Asp-504 and Asp-508. Dimethylallyl diphosphate is bound at residue Arg-513. Arg-514 provides a ligand contact to isopentenyl diphosphate. Dimethylallyl diphosphate-binding residues include Lys-591, Thr-592, Gln-628, Asn-635, and Lys-645.

This sequence in the N-terminal section; belongs to the terpene synthase family. The protein in the C-terminal section; belongs to the FPP/GGPP synthase family. The cofactor is Mg(2+).

It catalyses the reaction isopentenyl diphosphate + (2E,6E)-farnesyl diphosphate = (2E,6E,10E)-geranylgeranyl diphosphate + diphosphate. It carries out the reaction (2E,6E,10E,14E)-geranylfarnesyl diphosphate = quiannulatene + diphosphate. It participates in secondary metabolite biosynthesis; terpenoid biosynthesis. In terms of biological role, bifunctional sesterterpene synthase; part of the gene cluster that mediates the biosynthesis of the pentacyclic sesterterpene quiannulatic acid. The first step of the pathway is performed by the sesterterpene synthase (QS) that possesses both prenyl transferase and terpene cyclase activity, converting isopentenyl diphosphate and dimethylallyl diphosphate into geranylfarnesyl diphosphate (GFPP) and further converting GFPP into quiannulatene via an unprecedented cyclization mode which involves three rounds of hydride shifts and two successive C-C bond migrations to construct the 5-6-5-5-5 fused ring. The cytochrome P450 monooxygenase Qnn-P450 then oxidizes quiannulatene at C-19 in 3 successive reactions to afford quiannulatic acid. This is Quiannulatene synthase from Emericella variicolor (Aspergillus stellatus).